The following is a 158-amino-acid chain: Pycsar effector protein SaPycTM (158 aa).

Transmembrane regions (helical) follow at residues 20 to 40 (FADA…NFNF), 53 to 73 (IFNF…AFAV), and 136 to 156 (VFII…FQII).

Its subcellular location is the cell membrane. Functionally, pycsar (pyrimidine cyclase system for antiphage resistance) provides immunity against bacteriophage. The pyrimidine cyclase (PycC) synthesizes cyclic nucleotides in response to infection; these serve as specific second messenger signals. The signals activate the adjacent effector, leading to bacterial cell death and abortive phage infection. A clade E Pycsar system. In terms of biological role, the effector gene of a two-gene Pycsar system. Expression of this and adjacent SaPycC cytidylate cyclase (AC P0DV38) probably confers resistance to bacteriophage. The genes are probably only expressed in response to bacteriophage infection. Probably only responds to cCMP (produced by its cognate NTP cyclase), acts by impairing membrane integrity. This Staphylococcus aureus protein is Pycsar effector protein SaPycTM.